The following is a 168-amino-acid chain: Large ribosomal subunit protein uL10 (168 aa).

The protein belongs to the universal ribosomal protein uL10 family. As to quaternary structure, part of the ribosomal stalk of the 50S ribosomal subunit. The N-terminus interacts with L11 and the large rRNA to form the base of the stalk. The C-terminus forms an elongated spine to which L12 dimers bind in a sequential fashion forming a multimeric L10(L12)X complex.

Its function is as follows. Forms part of the ribosomal stalk, playing a central role in the interaction of the ribosome with GTP-bound translation factors. The polypeptide is Large ribosomal subunit protein uL10 (rplJ) (Buchnera aphidicola subsp. Baizongia pistaciae (strain Bp)).